We begin with the raw amino-acid sequence, 719 residues long: Lanosterol synthase (719 aa).

One copy of the PFTB 1 repeat lies at 118-160 (RIEVIRYLVNHANPEDGGWGIHIEGKSTVFGTALNYVVLRILG). D451 functions as the Proton donor in the catalytic mechanism. 3 PFTB repeats span residues 478–523 (LKDS…MIEH), 555–595 (VKNA…SCVK), and 604–645 (SRRA…VVQT).

The protein belongs to the terpene cyclase/mutase family.

The enzyme catalyses (S)-2,3-epoxysqualene = lanosterol. The protein operates within terpene metabolism; lanosterol biosynthesis; lanosterol from farnesyl diphosphate: step 3/3. Its function is as follows. Catalyzes the cyclization of (S)-2,3 oxidosqualene to lanosterol, a reaction that forms the sterol nucleus. This chain is Lanosterol synthase (ERG7), found in Pneumocystis carinii.